Here is a 771-residue protein sequence, read N- to C-terminus: Solute carrier family 7 member 14 (771 aa).

6 helical membrane passes run 58-78 (LISL…SGLV), 83-103 (AGPG…LSGV), 119-141 (AYTY…NLIL), 187-207 (YPDL…ALGV), 216-236 (VLNV…LFFI), and 251-271 (WSGV…FDII). Asn282 carries an N-linked (GlcNAc...) asparagine glycan. The next 5 membrane-spanning stretches (helical) occupy residues 291–311 (ASLV…TLMV), 336–356 (FVVA…SLFP), 360–380 (VIYA…VSSY), 384–404 (PVVA…LVSL), and 407–427 (LIEM…VCVL). A phosphoserine mark is found at Ser465, Ser468, and Ser488. The next 4 helical transmembrane spans lie at 565 to 585 (VTIC…FIIF), 596 to 616 (WAIL…FVIL), 628 to 648 (MAPC…YLML), and 655 to 675 (WIRF…YGIW). Asn676 carries N-linked (GlcNAc...) asparagine glycosylation. Residues 736–771 (DAKANGRTSSKAKSKSKHKQNSEALIANDELDYSPE) are disordered. The span at 745 to 754 (SKAKSKSKHK) shows a compositional bias: basic residues. Phosphoserine is present on residues Ser757 and Ser769.

This sequence belongs to the amino acid-polyamine-organocation (APC) superfamily. Cationic amino acid transporter (CAT) (TC 2.A.3.3) family. Expressed in skin fibroblasts.

It localises to the lysosome membrane. The catalysed reaction is 4-aminobutanoate(in) = 4-aminobutanoate(out). Imports 4-aminobutanoate (GABA) into lysosomes. May act as a GABA sensor that regulates mTORC2-dependent INS signaling and gluconeogenesis. The transport mechanism and substrate selectivity remain to be elucidated. The sequence is that of Solute carrier family 7 member 14 from Homo sapiens (Human).